We begin with the raw amino-acid sequence, 137 residues long: Large ribosomal subunit protein uL16 (137 aa).

This sequence belongs to the universal ribosomal protein uL16 family. Part of the 50S ribosomal subunit.

Binds 23S rRNA and is also seen to make contacts with the A and possibly P site tRNAs. This Wolbachia sp. subsp. Brugia malayi (strain TRS) protein is Large ribosomal subunit protein uL16.